A 129-amino-acid polypeptide reads, in one-letter code: Protein BUNDLE SHEATH DEFECTIVE 2, chloroplastic (129 aa).

Residues 1–43 (MAATASLTTTAPSPPALLKASAPLLISFRPVSRHCKNLCIKTK) constitute a chloroplast transit peptide. The CR-type zinc-finger motif lies at 49 to 123 (QSAKKHQKVK…AGFLGGFLST (75 aa)). Zn(2+) contacts are provided by C62, C65, N68, C73, C76, C97, C100, E105, C108, and C111.

The protein belongs to the BSD2 chaperone family. Interacts with the RuBisCo large subunit (RbcL) assembled as an intermediate complex made of eight RbcL and eight BSD2 subunits. In terms of tissue distribution, expressed in shoot tissues, in both bundle sheath and mesophyll cells.

Its subcellular location is the plastid. The protein localises to the chloroplast stroma. Its function is as follows. Chloroplast chaperone required for RuBisCo complex biogenesis and translational regulation of the RuBisCo large subunit (RbcL). Stabilizes an end-state assembly intermediate of eight RbcL subunits until the small subunits (RBCSs) become available to produce a complete stable RuBisCo complex containing eight small and eight large subunits. Involved in the differentiation of bundle sheath cells, especially chloroplast structure. This is Protein BUNDLE SHEATH DEFECTIVE 2, chloroplastic from Zea mays (Maize).